The sequence spans 77 residues: MNVFGIGLPELIVILVVALLIFGPKKLPEIGRSLGKTKRAFEEASREFQDEIKRQTAALEEEQQAKAEAESPREISP.

The chain crosses the membrane as a helical span at residues 3–23; sequence VFGIGLPELIVILVVALLIFG. Positions 56–77 are disordered; that stretch reads TAALEEEQQAKAEAESPREISP. Basic and acidic residues predominate over residues 63–77; that stretch reads QQAKAEAESPREISP.

It belongs to the TatA/E family. Forms a complex with TatC.

It is found in the cell inner membrane. In terms of biological role, part of the twin-arginine translocation (Tat) system that transports large folded proteins containing a characteristic twin-arginine motif in their signal peptide across membranes. TatA could form the protein-conducting channel of the Tat system. The protein is Sec-independent protein translocase protein TatA of Thermosynechococcus vestitus (strain NIES-2133 / IAM M-273 / BP-1).